We begin with the raw amino-acid sequence, 152 residues long: Transcriptional regulator MraZ (152 aa).

SpoVT-AbrB domains lie at A5 to E52 and A81 to T124.

Belongs to the MraZ family. Forms oligomers.

It is found in the cytoplasm. The protein resides in the nucleoid. Negatively regulates its own expression and that of the subsequent genes in the proximal part of the division and cell wall (dcw) gene cluster. Acts by binding directly to DNA. May also regulate the expression of genes outside the dcw cluster. The sequence is that of Transcriptional regulator MraZ from Pectobacterium carotovorum subsp. carotovorum (strain PC1).